Here is a 370-residue protein sequence, read N- to C-terminus: Dual-specificity RNA methyltransferase RlmN (370 aa).

The active-site Proton acceptor is Glu93. The Radical SAM core domain occupies 99-337 (EEGRGTLCVS…VTTVRKTRGD (239 aa)). Cys106 and Cys343 form a disulfide bridge. Cys113, Cys117, and Cys120 together coordinate [4Fe-4S] cluster. S-adenosyl-L-methionine contacts are provided by residues 167-168 (GE), Ser199, 221-223 (SLH), and Asn300. The S-methylcysteine intermediate role is filled by Cys343.

Belongs to the radical SAM superfamily. RlmN family. Requires [4Fe-4S] cluster as cofactor.

Its subcellular location is the cytoplasm. It carries out the reaction adenosine(2503) in 23S rRNA + 2 reduced [2Fe-2S]-[ferredoxin] + 2 S-adenosyl-L-methionine = 2-methyladenosine(2503) in 23S rRNA + 5'-deoxyadenosine + L-methionine + 2 oxidized [2Fe-2S]-[ferredoxin] + S-adenosyl-L-homocysteine. It catalyses the reaction adenosine(37) in tRNA + 2 reduced [2Fe-2S]-[ferredoxin] + 2 S-adenosyl-L-methionine = 2-methyladenosine(37) in tRNA + 5'-deoxyadenosine + L-methionine + 2 oxidized [2Fe-2S]-[ferredoxin] + S-adenosyl-L-homocysteine. Specifically methylates position 2 of adenine 2503 in 23S rRNA and position 2 of adenine 37 in tRNAs. m2A2503 modification seems to play a crucial role in the proofreading step occurring at the peptidyl transferase center and thus would serve to optimize ribosomal fidelity. The protein is Dual-specificity RNA methyltransferase RlmN of Francisella tularensis subsp. tularensis (strain WY96-3418).